The following is a 95-amino-acid chain: Aspartyl/glutamyl-tRNA(Asn/Gln) amidotransferase subunit C (95 aa).

Belongs to the GatC family. As to quaternary structure, heterotrimer of A, B and C subunits.

It carries out the reaction L-glutamyl-tRNA(Gln) + L-glutamine + ATP + H2O = L-glutaminyl-tRNA(Gln) + L-glutamate + ADP + phosphate + H(+). The enzyme catalyses L-aspartyl-tRNA(Asn) + L-glutamine + ATP + H2O = L-asparaginyl-tRNA(Asn) + L-glutamate + ADP + phosphate + 2 H(+). Its function is as follows. Allows the formation of correctly charged Asn-tRNA(Asn) or Gln-tRNA(Gln) through the transamidation of misacylated Asp-tRNA(Asn) or Glu-tRNA(Gln) in organisms which lack either or both of asparaginyl-tRNA or glutaminyl-tRNA synthetases. The reaction takes place in the presence of glutamine and ATP through an activated phospho-Asp-tRNA(Asn) or phospho-Glu-tRNA(Gln). This is Aspartyl/glutamyl-tRNA(Asn/Gln) amidotransferase subunit C from Chlorobium luteolum (strain DSM 273 / BCRC 81028 / 2530) (Pelodictyon luteolum).